A 366-amino-acid chain; its full sequence is MNKVVLLCRPGFEKECAAEITDKAGQREIFGFARVKENSGYVIYECYQPDDGDKLIRELPFSSLIFARQWFVVGELLQHLPPEDRITPIVGMLQGVVEKGGELRVEVADTNESKELLKFCRKFTVPLRAALRDAGVLANYETPKRPVVHVFFIAPGCCYTGYSYSNNNSPFYMGIPRLKFPAEAPSRSTLKLEEAFHVFIPADEWDERLANGMWAVDLGACPGGWTYQLVKRNMWVYSVDNGPMAQSLMDTGQVTWLREDGFKFRPTRSNISWMVCDMVEKPAKVAALMAQWLVNGWCRETIFNLKLPMKKRYEEVSHNLAYIQAQLDEHGINAQIQARQLYHDREEVTVHVRRIWAAVGGRRDER.

Residues serine 188, 221–224 (CPGG), aspartate 240, aspartate 260, and aspartate 277 each bind S-adenosyl-L-methionine. Residue lysine 306 is the Proton acceptor of the active site.

This sequence belongs to the class I-like SAM-binding methyltransferase superfamily. RNA methyltransferase RlmE family. RlmM subfamily. In terms of assembly, monomer.

It is found in the cytoplasm. It catalyses the reaction cytidine(2498) in 23S rRNA + S-adenosyl-L-methionine = 2'-O-methylcytidine(2498) in 23S rRNA + S-adenosyl-L-homocysteine + H(+). In terms of biological role, catalyzes the 2'-O-methylation at nucleotide C2498 in 23S rRNA. This Shigella boydii serotype 4 (strain Sb227) protein is Ribosomal RNA large subunit methyltransferase M.